A 159-amino-acid chain; its full sequence is MDERIDPDELLAAVGFDADESVLTRRQAEVLALREHDIRQSDIGELLGTSRANISSIERNARENVEKARQTVAFANTLTAPVCVDIEAGTDIYDIPPTVYAACDEAGVEVNYGSSNLLQLIDDAVDGAIQQDTVQVPLRIDVTNDGVVHVRGQSAERTE.

Belongs to the Tfx family.

Functionally, putative transcriptional regulator. The polypeptide is Putative transcriptional regulatory protein rrnAC0199 (Haloarcula marismortui (strain ATCC 43049 / DSM 3752 / JCM 8966 / VKM B-1809) (Halobacterium marismortui)).